A 967-amino-acid polypeptide reads, in one-letter code: uncharacterized protein (967 aa).

Disordered regions lie at residues 1-23 (MQNAPKCYLPNSRKGRDVNFHDR) and 41-72 (FTMHSESIGPKSLDSLSPRRLSNYSSAVDPRT). Over residues 14–23 (KGRDVNFHDR) the composition is skewed to basic and acidic residues. Residues 60–72 (RLSNYSSAVDPRT) are compositionally biased toward polar residues. Ser-86 is subject to Phosphoserine. Disordered stretches follow at residues 135 to 259 (AVSE…QHLP), 271 to 296 (SVSRSYQSPASTPRSSVSSVSSSPPE), 380 to 399 (DSTTEYVNTESSSKTPAPHK), 437 to 464 (HSYGSPKSLHHKSSSAGERPVSPTFVAD), and 499 to 544 (GTRF…KSLS). Residues 162-187 (ESSTSNNLETGNSTNTALHNVSSPLE) show a composition bias toward polar residues. Residues 205 to 218 (HDLDEVISEKDTSL) are compositionally biased toward basic and acidic residues. Basic residues predominate over residues 221–234 (RSSRGRSSAPKRRK). Positions 278–294 (SPASTPRSSVSSVSSSP) are enriched in low complexity. Residues 382–394 (TTEYVNTESSSKT) are compositionally biased toward polar residues. A compositionally biased stretch (basic residues) spans 499 to 508 (GTRFHSRSSH). At Ser-585 the chain carries Phosphoserine. 2 disordered regions span residues 594–665 (ESNE…SVND) and 681–708 (DHRIPASDNQNNNNNDANALAENSESQH). Basic and acidic residues predominate over residues 608–622 (YDSRESTGHTIKELR). Residues 686–704 (ASDNQNNNNNDANALAENS) are compositionally biased toward low complexity. 728-736 (PCVLDVKMG) serves as a coordination point for substrate.

It belongs to the inositol phosphokinase (IPK) family.

The protein resides in the cytoplasm. This is an uncharacterized protein from Schizosaccharomyces pombe (strain 972 / ATCC 24843) (Fission yeast).